We begin with the raw amino-acid sequence, 307 residues long: uncharacterized protein (307 aa).

Positions 54–307 (RHYLSTSMRV…KALPVDFFRE (254 aa)) constitute an EAL domain. A run of 2 helical transmembrane segments spans residues 158 to 178 (PGFL…AHAL) and 203 to 223 (ALGV…LAYL).

It localises to the cell membrane. This is an uncharacterized protein from Mycobacterium tuberculosis (strain CDC 1551 / Oshkosh).